The sequence spans 2766 residues: Thyroglobulin (2766 aa).

The N-terminal stretch at M1 to A20 is a signal peptide. Y25 carries the iodotyrosine; alternate modification. Y25 carries the post-translational modification Sulfotyrosine; alternate. Position 25 is a thyroxine; alternate (Y25). Y25 carries the post-translational modification Triiodothyronine; alternate. Thyroglobulin type-1 domains are found at residues L32–C93, L94–C161, P162–C298, and P299–C359. Intrachain disulfides connect C35/C53, C64/C71, C73/C93, C97/C121, C132/C139, C141/C161, C165/C184, and C195/C236. The residue at position 109 (Y109) is an Iodotyrosine. N-linked (GlcNAc...) asparagine glycosylation occurs at N111. At Y150 the chain carries Iodotyrosine; alternate. Diiodotyrosine; alternate is present on Y150. The N-linked (GlcNAc...) asparagine glycan is linked to N199. Residues Y235 and Y259 each carry the iodotyrosine modification. Cystine bridges form between C302–C320, C331–C337, C339–C359, C365–C620, C408–C608, C631–C636, C638–C658, C662–C687, and C698–C703. N-linked (GlcNAc...) asparagine glycans are attached at residues N484 and N496. Thyroglobulin type-1 domains lie at A605–C658, P659–C726, P727–C922, P923–C1074, P1075–C1146, and P1147–C1211. Y704 carries the post-translational modification Iodotyrosine; alternate. Y704 is modified (thyroxine; alternate). Residue Y704 is modified to Triiodothyronine; alternate. Position 704 is a diiodotyrosine; alternate (Y704). Intrachain disulfides connect C705–C726, C730–C763, C774–C899, C901–C922, C926–C1032, C1043–C1050, C1052–C1074, C1078–C1109, C1127–C1146, C1150–C1170, C1182–C1189, C1191–C1211, C1216–C1265, C1232–C1246, C1306–C1356, and C1331–C1347. N-linked (GlcNAc...) asparagine glycosylation occurs at N748. Y785 carries the post-translational modification Iodotyrosine. N-linked (GlcNAc...) asparagine glycosylation occurs at N817. An Iodotyrosine; alternate modification is found at Y867. At Y867 the chain carries Diiodotyrosine; alternate. Y884 is subject to Diiodotyrosine. An N-linked (GlcNAc...) asparagine glycan is attached at N948. Y993 is modified (iodotyrosine; alternate). Y993 is modified (diiodotyrosine; alternate). N1141 carries an N-linked (GlcNAc...) asparagine glycan. Y1310 is modified (iodotyrosine). Thyroxine is present on Y1310. 2 N-linked (GlcNAc...) asparagine glycosylation sites follow: N1349 and N1365. Disulfide bonds link C1441-C1458, C1461-C1472, C1475-C1489, C1492-C1509, C1513-C1522, C1542-C1564, C1602-C1626, C1606-C1612, and C1638-C1661. Type II repeat units follow at residues A1455–Q1468, D1469–G1485, and S1486–G1502. One can recognise a Thyroglobulin type-1 11 domain in the interval V1510–C1564. Residues C1602–Y1722 form a Type IIIA repeat. N-linked (GlcNAc...) asparagine glycosylation is found at N1715, N1729, N1773, and N1864. Intrachain disulfides connect C1723-C1748, C1727-C1733, C1732-C1834, and C1759-C1776. The Type IIIB repeat unit spans residues C1723–W1889. Cystine bridges form between C1890–C1916, C1894–C1901, C1925–C1936, C1993–C2021, C1997–C2003, C2002–C2073, and C2032–C2045. A Type IIIA repeat occupies C1890 to E1992. A glycan (N-linked (GlcNAc...) asparagine) is linked at N1935. A Type IIIB repeat occupies C1993–Q2125. N2010 carries N-linked (GlcNAc...) asparagine glycosylation. N2120 carries an N-linked (GlcNAc...) asparagine glycan. The stretch at D2126–R2183 is one Type IIIA repeat. Disulfide bonds link C2128-C2152, C2132-C2138, and C2161-C2170. At Y2182 the chain carries Iodotyrosine. Residues G2186 to K2766 form a cholinesterase-like (ChEL) region. The N-linked (GlcNAc...) asparagine glycan is linked to N2249. An intrachain disulfide couples C2263 to C2280. An N-linked (GlcNAc...) asparagine glycan is attached at N2294. An intrachain disulfide couples C2441 to C2452. Y2539 carries the post-translational modification Thyroxine. Y2572 carries the iodotyrosine; alternate modification. Y2572 is modified (thyroxine; alternate). Y2572 bears the Triiodothyronine; alternate mark. Diiodotyrosine; alternate is present on Y2572. An N-linked (GlcNAc...) asparagine glycan is attached at N2581. 2 positions are modified to iodotyrosine: Y2586 and Y2616. C2590 and C2714 are oxidised to a cystine. The residue at position 2696 (Y2696) is a Diiodotyrosine. Residues G2729–K2766 form a disordered region. The span at E2739–L2753 shows a compositional bias: acidic residues. Y2764 bears the Iodotyrosine; alternate mark. Position 2764 is a thyroxine; alternate (Y2764). The residue at position 2764 (Y2764) is a Triiodothyronine; alternate. Position 2764 is a diiodotyrosine; alternate (Y2764).

Belongs to the type-B carboxylesterase/lipase family. In terms of assembly, monomer. Homodimer (via ChEL region); occurs in the endoplasmic reticulum and is required for export to the Golgi apparatus. Homooligomer; disulfide-linked; stored in this form in the thyroid follicle lumen. Iodinated on tyrosine residues by TPO. There are 4 pairs of iodinated tyrosines used for coupling: acceptor Tyr-25 is coupled to donor Tyr-150 or Tyr-235, acceptor Tyr-2572 is coupled to donor Tyr-2539, acceptor Tyr-2764 in monomer 1 is coupled to donor Tyr-2764 in monomer 2 and acceptor Tyr-1310 in monomer 1 is coupled to donor Tyr-109 in monomer 2. In terms of processing, sulfated tyrosines are desulfated during iodination. Post-translationally, undergoes sequential proteolysis by cathepsins to release thyroxine (T4) and triiodothyronine (T3) hormones. In the thyroid follicle lumen, cross-linked TG (storage form) is solubilized by limited proteolysis mediated by cathepsins CTSB and/or CTSL. Partially cleaved TG is further processed by CTSK/cathepsin K and/or CTSL resulting in the release of T4. Following endocytosis, further processing occurs leading to the release of T3 and more T4 hormones. Specifically expressed in the thyroid gland.

The protein resides in the secreted. Functionally, acts as a substrate for the production of iodinated thyroid hormones thyroxine (T4) and triiodothyronine (T3). The synthesis of T3 and T4 involves iodination of selected tyrosine residues of TG/thyroglobulin followed by their oxidative coupling. Following TG re-internalization and lysosomal-mediated proteolysis, T3 and T4 are released from the polypeptide backbone leading to their secretion into the bloodstream. One dimer produces 7 thyroid hormone molecules. This is Thyroglobulin (Tg) from Mus musculus (Mouse).